We begin with the raw amino-acid sequence, 417 residues long: NADH-quinone oxidoreductase subunit D (417 aa).

It belongs to the complex I 49 kDa subunit family. As to quaternary structure, NDH-1 is composed of 14 different subunits. Subunits NuoB, C, D, E, F, and G constitute the peripheral sector of the complex.

The protein localises to the cell inner membrane. The catalysed reaction is a quinone + NADH + 5 H(+)(in) = a quinol + NAD(+) + 4 H(+)(out). NDH-1 shuttles electrons from NADH, via FMN and iron-sulfur (Fe-S) centers, to quinones in the respiratory chain. The immediate electron acceptor for the enzyme in this species is believed to be ubiquinone. Couples the redox reaction to proton translocation (for every two electrons transferred, four hydrogen ions are translocated across the cytoplasmic membrane), and thus conserves the redox energy in a proton gradient. This chain is NADH-quinone oxidoreductase subunit D, found in Francisella tularensis subsp. tularensis (strain FSC 198).